An 842-amino-acid polypeptide reads, in one-letter code: DNA gyrase subunit A (842 aa).

Positions 42–511 (LPEVRDGLKP…ADGEVSDEDL (470 aa)) constitute a Topo IIA-type catalytic domain. Residue Y130 is the O-(5'-phospho-DNA)-tyrosine intermediate of the active site. Positions 538 to 544 (QKRGGKG) match the GyrA-box motif. Residues 822-842 (EDEAAESISESDADTAESPEA) are disordered.

Belongs to the type II topoisomerase GyrA/ParC subunit family. In terms of assembly, heterotetramer, composed of two GyrA and two GyrB chains. In the heterotetramer, GyrA contains the active site tyrosine that forms a transient covalent intermediate with DNA, while GyrB binds cofactors and catalyzes ATP hydrolysis.

It is found in the cytoplasm. The catalysed reaction is ATP-dependent breakage, passage and rejoining of double-stranded DNA.. Inhibited by 4-quinoline drugs (nalidixic acid, ciprofloxacin, ofloxacin), although it is much less sensitive than the corresponding enzyme from E.coli. Its function is as follows. A type II topoisomerase that negatively supercoils closed circular double-stranded (ds) DNA in an ATP-dependent manner to modulate DNA topology and maintain chromosomes in an underwound state. Negative supercoiling favors strand separation, and DNA replication, transcription, recombination and repair, all of which involve strand separation. Also able to catalyze the interconversion of other topological isomers of dsDNA rings, including catenanes and knotted rings. Type II topoisomerases break and join 2 DNA strands simultaneously in an ATP-dependent manner. The sequence is that of DNA gyrase subunit A from Mycolicibacterium smegmatis (strain ATCC 700084 / mc(2)155) (Mycobacterium smegmatis).